We begin with the raw amino-acid sequence, 400 residues long: Putative lysosomal acid lipase/cholesteryl ester hydrolase (400 aa).

A signal peptide spans 1 to 17 (MWRLIIIAILFQGLVNS). Asparagine 34, asparagine 129, and asparagine 159 each carry an N-linked (GlcNAc...) asparagine glycan. Residues 78 to 378 (PAVFLQHGLL…EWEHLDFIWG (301 aa)) enclose the AB hydrolase-1 domain. Serine 172 acts as the Charge relay system in catalysis. N-linked (GlcNAc...) asparagine glycosylation occurs at asparagine 271. Catalysis depends on histidine 372, which acts as the Charge relay system.

The protein belongs to the AB hydrolase superfamily. Lipase family. Expressed by the venom gland.

It is found in the secreted. The catalysed reaction is a sterol ester + H2O = a sterol + a fatty acid + H(+). In physiological conditions, is crucial for intracellular hydrolysis of cholesteryl esters and triglycerides that have been internalized via receptor-mediated endocytosis of lipoprotein particles. In venom, the biological contribution is unknown. The polypeptide is Putative lysosomal acid lipase/cholesteryl ester hydrolase (Crotalus adamanteus (Eastern diamondback rattlesnake)).